Reading from the N-terminus, the 964-residue chain is DNA mismatch repair protein MSH2 (964 aa).

688–695 (GPNMGGKS) contributes to the ATP binding site. An interaction with MSH6 region spans residues 851–964 (DQSFGIHVAE…YLKYIKALLL (114 aa)).

Belongs to the DNA mismatch repair MutS family. In terms of assembly, heterodimer consisting of MSH2-MSH6 (MutS alpha) or MSH2-MSH3 (MutS beta). Both heterodimers form a ternary complex with MutL alpha (MLH1-PMS1). MutS beta also forms a ternary complex with MutL beta (MLH1-MLH3), and possibly with a MLH1-MLH2 heterodimer. Both heterodimers interact with proliferating cell nuclear antigen (PCNA/POL30). This interaction is disrupted upon binding of the MutS heterodimers to mismatch DNA. Interacts with SAW1.

It is found in the nucleus. With respect to regulation, inhibited by Cd(2+). Component of the post-replicative DNA mismatch repair system (MMR). Forms two different heterodimers: MutS alpha (MSH2-MSH6 heterodimer) and MutS beta (MSH2-MSH3 heterodimer), which bind to DNA mismatches thereby initiating DNA repair. MSH2 seems to act as a scaffold for the other MutS homologs that provide substrate-binding and substrate specificity. When bound, heterodimers bend the DNA helix and shield approximately 20 base pairs. MutS alpha acts mainly to repair base-base and single insertion-deletion mismatches that occur during replication, but can also repair longer insertion-deletion loops (IDLs), although with decreasing efficiency as the size of the extrahelical loop increases. MutS beta acts mainly to repair IDLs from 2 to 13 nucleotides in size, but can also repair base-base and single insertion-deletion mismatches. After mismatch binding, MutS alpha or beta form a ternary complex with a MutL heterodimer, which is thought to be responsible for directing the downstream MMR events, including strand discrimination, excision, and resynthesis. ATP binding and hydrolysis play a pivotal role in mismatch repair functions. Both subunits bind ATP, but with differing affinities, and their ATPase kinetics are also very different. MSH6 binds and hydrolyzes ATP rapidly, whereas MSH2 catalyzes ATP at a substantially slower rate. Binding to a mismatched base pair suppresses MSH6-catalyzed ATP hydrolysis, but not the activity of MSH2. ATP binding to both subunits is necessary to trigger a change in MutS alpha interaction with mismatched DNA, converting MutS alpha into a sliding clamp capable of hydrolysis-independent movement along DNA, and also facilitates formation of ternary complexes containing MutS and MutL proteins and the mismatch. MutS beta also has a role in regulation of heteroduplex formation during mitotic and meiotic recombination. MutS beta binds to DNA flap structures predicted to form during recombination, and is required for 3' non-homologous tail removal (NHTR). MutS beta-binding alters the DNA conformation of its substrate at the ds/ssDNA junction and may facilitate its recognition and/or cleavage by the downstream nucleotide excision repair (NER) RAD1-RAD10 endonuclease. The protein is DNA mismatch repair protein MSH2 (MSH2) of Saccharomyces cerevisiae (strain ATCC 204508 / S288c) (Baker's yeast).